The following is a 508-amino-acid chain: uncharacterized protein (508 aa).

One can recognise a Resolvase/invertase-type recombinase catalytic domain in the interval K3–A163. Residue S11 is the O-(5'-phospho-DNA)-serine intermediate of the active site. The segment at residues P175–I290 is a DNA-binding region (recombinase).

This is an uncharacterized protein from Escherichia coli (strain K12).